Here is a 288-residue protein sequence, read N- to C-terminus: ATP synthase gamma chain (288 aa).

Belongs to the ATPase gamma chain family. In terms of assembly, F-type ATPases have 2 components, CF(1) - the catalytic core - and CF(0) - the membrane proton channel. CF(1) has five subunits: alpha(3), beta(3), gamma(1), delta(1), epsilon(1). CF(0) has three main subunits: a, b and c.

The protein resides in the cell inner membrane. Its function is as follows. Produces ATP from ADP in the presence of a proton gradient across the membrane. The gamma chain is believed to be important in regulating ATPase activity and the flow of protons through the CF(0) complex. The sequence is that of ATP synthase gamma chain from Polaromonas naphthalenivorans (strain CJ2).